The following is a 154-amino-acid chain: Toxin YhaV (154 aa).

Homohexamer; forms a complex with PrlF (SohA) with stoichiometry PrlF(2)-YhaV(4), possibly as a YhaV(2)-PrlF(2)-YhaV(2) complex like the MazFE complex. May dimerize in solution.

Toxic component of a type II toxin-antitoxin (TA) system. Has RNase activity in vitro. Acts as a transcription factor. The YhaV/PrlF complex binds the prlF-yhaV operon, probably negatively regulating its expression. The polypeptide is Toxin YhaV (yhaV) (Escherichia coli O6:H1 (strain CFT073 / ATCC 700928 / UPEC)).